The following is a 122-amino-acid chain: Large ribosomal subunit protein bL12 (122 aa).

It belongs to the bacterial ribosomal protein bL12 family. In terms of assembly, homodimer. Part of the ribosomal stalk of the 50S ribosomal subunit. Forms a multimeric L10(L12)X complex, where L10 forms an elongated spine to which 2 to 4 L12 dimers bind in a sequential fashion. Binds GTP-bound translation factors.

Forms part of the ribosomal stalk which helps the ribosome interact with GTP-bound translation factors. Is thus essential for accurate translation. The polypeptide is Large ribosomal subunit protein bL12 (Shewanella loihica (strain ATCC BAA-1088 / PV-4)).